The primary structure comprises 805 residues: Na(+)/H(+) antiporter subunit A (805 aa).

21 helical membrane-spanning segments follow: residues L4–Y22, H29–I51, S80–L102, L109–L128, L132–F154, M167–G189, F209–I231, S244–V266, A271–V293, G300–A322, P332–G354, L375–A397, I431–F453, I474–I496, G529–M551, Y597–F614, I629–N651, A656–F674, L679–L701, N714–L736, and M778–I795.

It belongs to the CPA3 antiporters (TC 2.A.63) subunit A family. In terms of assembly, forms a heterooligomeric complex that consists of seven subunits: MrpA, MrpB, MrpC, MrpD, MrpE, MrpF and MrpG.

The protein resides in the cell membrane. In terms of biological role, mnh complex is a Na(+)Li(+)/H(+) antiporter involved in Na(+) and/or Li(+) excretion and Na(+) resistance. Na(+)/H(+) antiport consumes a transmembrane electrical potential, and is thus inferred to be electrogenic. Does not transport K(+), Ca(2+) or Mg(2+). This is Na(+)/H(+) antiporter subunit A (mrpA) from Alkalihalophilus pseudofirmus (strain ATCC BAA-2126 / JCM 17055 / OF4) (Bacillus pseudofirmus).